The primary structure comprises 595 residues: DNA polymerase (595 aa).

The 3'-5' exonuclease domain occupies 1–212 (MIELRHEVQG…CKSLTPLVPD (212 aa)). A polymerase region spans residues 213–595 (VSRSLVPYEH…SWGSLYGADY (383 aa)).

This sequence belongs to the DNA polymerase type-A family.

The enzyme catalyses DNA(n) + a 2'-deoxyribonucleoside 5'-triphosphate = DNA(n+1) + diphosphate. Functionally, replicates viral genomic DNA. This polymerase possesses two enzymatic activities: DNA synthesis (polymerase) and an exonucleolytic activity that degrades single-stranded DNA in the 3'-5' direction. This Mycobacterium phage L5 (Mycobacteriophage L5) protein is DNA polymerase (44).